The primary structure comprises 391 residues: Esterase (391 aa).

The first 26 residues, 1–26, serve as a signal peptide directing secretion; sequence MEFPETNNNPIITLSFLLCMLSLAYA. Serine 41 acts as the Nucleophile in catalysis. N-linked (GlcNAc...) asparagine glycans are attached at residues asparagine 186, asparagine 193, and asparagine 313. Residues aspartate 347 and histidine 350 contribute to the active site.

This sequence belongs to the 'GDSL' lipolytic enzyme family. In terms of processing, the N-terminus is blocked. Glycosylated.

In terms of biological role, has lipase and esterase activities. May be involved in plant defense. The protein is Esterase of Hevea brasiliensis (Para rubber tree).